We begin with the raw amino-acid sequence, 351 residues long: D-alanine--D-alanine ligase (351 aa).

Residues 135-343 (NQIFLQSGQK…MEEVFSDLIE (209 aa)) enclose the ATP-grasp domain. ATP is bound at residue 167–222 (LETLGFPQFLKPVEGGSSVSVYKITNREQLKEKLALIFESDSKVMSQSFLTGIEVS). Residues D298, E310, and N312 each coordinate Mg(2+).

Belongs to the D-alanine--D-alanine ligase family. Mg(2+) serves as cofactor. The cofactor is Mn(2+).

It is found in the cytoplasm. It catalyses the reaction 2 D-alanine + ATP = D-alanyl-D-alanine + ADP + phosphate + H(+). It functions in the pathway cell wall biogenesis; peptidoglycan biosynthesis. Its function is as follows. Cell wall formation. The protein is D-alanine--D-alanine ligase of Leptospira interrogans serogroup Icterohaemorrhagiae serovar copenhageni (strain Fiocruz L1-130).